The primary structure comprises 435 residues: Rho GTPase-activating protein 4 (435 aa).

Residues 1 to 59 (MAKVLKSSQSCHFPSPSSSSSTSCGGGNDGSNRDPHSPFNISRREEEEEEEERSEKERE) are disordered. Residues 7–23 (SSQSCHFPSPSSSSSTS) show a composition bias toward low complexity. In terms of domain architecture, CRIB spans 93–106 (IGVPTDVRHVAHVT). The region spanning 138-319 (VSTESMQLSY…LIVKTLKDRK (182 aa)) is the Rho-GAP domain. Positions 321–343 (SRDKLVPASNPSPRDHNGDQSSS) are disordered.

Acts as a GTPase activator for the Rac-type GTPase by converting it to an inactive GDP-bound state. Acts as a negative feedback regulator in tolerance to oxygen deprivation which requires ARAC4/ROP2. This chain is Rho GTPase-activating protein 4 (ROPGAP4), found in Arabidopsis thaliana (Mouse-ear cress).